The following is a 376-amino-acid chain: Cellular tumor antigen p53 (376 aa).

The transcription activation (acidic) stretch occupies residues 1 to 36 (MEGNGERDTMMVEPPDSQEFAELWLRNLIVRDNSLW). A DNA-binding region spans residues 77 to 268 (DYPGLLNFTL…KTEESNFKKQ (192 aa)). Positions 150–159 (RCPHHERSND) are enriched in basic and acidic residues. The tract at residues 150 to 171 (RCPHHERSNDSSDGPAPPGHLL) is disordered. Zn(2+)-binding residues include C151, H154, C214, and C218. The segment at 249–256 (RVCACPGR) is interaction with DNA. 2 stretches are compositionally biased toward basic and acidic residues: residues 257-270 (DRKTEESNFKKQQE) and 282-294 (SMKDPPSHPEASK). The interval 257–306 (DRKTEESNFKKQQEPKTSGKTLTKRSMKDPPSHPEASKKSKNSSSDDEIY) is disordered. Positions 280–297 (KRSMKDPPSHPEASKKSK) match the Bipartite nuclear localization signal motif. Residues 303-334 (DEIYTLQVRGKERYEFLKKINDGLELSDVVPP) are oligomerization. The Nuclear export signal signature appears at 317-328 (EFLKKINDGLEL). Positions 342–376 (QKLLSKTCRKERDGAAGEPKRGKKRLVKEEKCDSD) are disordered. The basic (repression of DNA-binding) stretch occupies residues 347–372 (KTCRKERDGAAGEPKRGKKRLVKEEK). Basic and acidic residues predominate over residues 349 to 361 (CRKERDGAAGEPK).

It belongs to the p53 family. As to quaternary structure, binds DNA as a homotetramer. Zn(2+) serves as cofactor.

The protein resides in the cytoplasm. The protein localises to the nucleus. In terms of biological role, multifunctional transcription factor that induces cell cycle arrest, DNA repair or apoptosis upon binding to its target DNA sequence. Acts as a tumor suppressor in many tumor types; induces growth arrest or apoptosis depending on the physiological circumstances and cell type. Negatively regulates cell division by controlling expression of a set of genes required for this process. One of the activated genes is an inhibitor of cyclin-dependent kinases. Apoptosis induction seems to be mediated either by stimulation of BAX and FAS antigen expression, or by repression of Bcl-2 expression. The chain is Cellular tumor antigen p53 (tp53) from Ictalurus punctatus (Channel catfish).